Consider the following 57-residue polypeptide: Potassium channel toxin alpha-KTx 26.3 (57 aa).

Positions 1-15 (MSGLSVFILIALVLS) are cleaved as a signal peptide. Residues 16–24 (VIIDVLNNS) constitute a propeptide that is removed on maturation. 3 disulfides stabilise this stretch: Cys30-Cys48, Cys34-Cys53, and Cys38-Cys55.

It belongs to the short scorpion toxin superfamily. Potassium channel inhibitor family. Alpha-KTx 26 subfamily. In terms of tissue distribution, expressed by the venom gland.

It localises to the secreted. Recombinant toxin that reversibly inhibits the potassium current of mKv1.3/KCNA3 channel stably expressed in COS7 cells (IC(50)=150 nM). The polypeptide is Potassium channel toxin alpha-KTx 26.3 (Mesobuthus gibbosus (Mediterranean checkered scorpion)).